Here is a 327-residue protein sequence, read N- to C-terminus: MKPGFSPRGGGFGGRGGFGDRGGRGGGRGGRGGFGGGRGGFGGGGRGRGGGGGGFRGRGGGGGRGGGFQSGGNRGRGGGRGGKRGNQSGKNVMVEPHRHEGVFICRGKEDALVTKNLVPGESVYGEKRVSISEGDDKIEYRAWNPFRSKLAAAILGGVDQIHIKPGAKVLYLGAASGTTVSHVSDIVGPDGLVYAVEFSHRSGRDLINLAKKRTNIIPVIEDARHPHKYRMLIAMVDVIFADVAQPDQTRIVALNAHTFLRNGGHFVISIKANCIDSTASAEAVFASEVKKMQQENMKPQEQLTLEPYERDHAVVVGVYRPPPKVKN.

Residues 1-95 are disordered; it reads MKPGFSPRGG…NQSGKNVMVE (95 aa). Residues 7-80 show a composition bias toward gly residues; it reads PRGGGFGGRG…GGNRGRGGGR (74 aa). Residues Arg8, Arg15, Arg21, Arg24, Arg28, and Arg31 each carry the asymmetric dimethylarginine modification. Residues Lys90, Lys108, and Lys115 each participate in a glycyl lysine isopeptide (Lys-Gly) (interchain with G-Cter in SUMO2) cross-link. Lys108 carries the N6-acetyllysine modification. At Ser122 the chain carries Phosphoserine. N6-acetyllysine is present on Lys127. 2 positions are modified to phosphoserine: Ser130 and Ser132. Glycyl lysine isopeptide (Lys-Gly) (interchain with G-Cter in SUMO2) cross-links involve residues Lys137, Lys149, and Lys164. Residues 178–179 and 197–198 each bind S-adenosyl-L-methionine; these read TT and EF. Lys211 and Lys212 each carry N6-acetyllysine. Residues 222-223 and 242-245 each bind S-adenosyl-L-methionine; these read DA and DVAQ.

Belongs to the methyltransferase superfamily. Fibrillarin family. In terms of assembly, component of box C/D small nucleolar ribonucleoprotein (snoRNP) particles that contain SNU13, FBL, NOP5 and NOP56, plus a guide RNA. It is associated with the U3, U8, U13, X and Y small nuclear RNAs. Component of several ribosomal and nucleolar protein complexes. Part of the small subunit (SSU) processome, composed of more than 70 proteins and the RNA chaperone small nucleolar RNA (snoRNA) U3. Interacts with PRMT5 and UTP20. Interacts with DDX5 and C1QBP. Interacts with NOL11. Interacts with PIH1D1. Interacts with RRP1B. Interacts with NOLC1. Interacts with SDE2. Interacts with NOP2 and NOP56. By homology to other fibrillarins, some or all of the N-terminal domain arginines are modified to asymmetric dimethylarginine (DMA). Post-translationally, ubiquitinated. Ubiquitination leads to proteasomal degradation. Deubiquitinated by USP36. In terms of processing, acetylated by CREBBP/CBP, preventing methylation of 'Gln-105' of histone H2A (H2AQ104me), without affecting rRNA methylation. Deacetylation by SIRT7 restores methylation of 'Gln-105' of histone H2A (H2AQ104me).

The protein resides in the nucleus. It localises to the nucleolus. It is found in the nucleoplasm. The enzyme catalyses L-glutaminyl-[histone H2A] + S-adenosyl-L-methionine = N(5)-methyl-L-glutaminyl-[histone H2A] + S-adenosyl-L-homocysteine + H(+). It catalyses the reaction a ribonucleotide in rRNA + S-adenosyl-L-methionine = a 2'-O-methylribonucleotide in rRNA + S-adenosyl-L-homocysteine + H(+). The catalysed reaction is a ribonucleotide in U6 snRNA + S-adenosyl-L-methionine = a 2'-O-methylribonucleotide in U6 snRNA + S-adenosyl-L-homocysteine + H(+). In terms of biological role, S-adenosyl-L-methionine-dependent methyltransferase that has the ability to methylate both RNAs and proteins. Involved in pre-rRNA processing by catalyzing the site-specific 2'-hydroxyl methylation of ribose moieties in pre-ribosomal RNA. Site specificity is provided by a guide RNA that base pairs with the substrate. Methylation occurs at a characteristic distance from the sequence involved in base pairing with the guide RNA. Probably catalyzes 2'-O-methylation of U6 snRNAs in box C/D RNP complexes. U6 snRNA 2'-O-methylation is required for mRNA splicing fidelity. Also acts as a protein methyltransferase by mediating methylation of 'Gln-105' of histone H2A (H2AQ104me), a modification that impairs binding of the FACT complex and is specifically present at 35S ribosomal DNA locus. Part of the small subunit (SSU) processome, first precursor of the small eukaryotic ribosomal subunit. During the assembly of the SSU processome in the nucleolus, many ribosome biogenesis factors, an RNA chaperone and ribosomal proteins associate with the nascent pre-rRNA and work in concert to generate RNA folding, modifications, rearrangements and cleavage as well as targeted degradation of pre-ribosomal RNA by the RNA exosome. The polypeptide is rRNA 2'-O-methyltransferase fibrillarin (Mus musculus (Mouse)).